A 598-amino-acid polypeptide reads, in one-letter code: Biotin-dependent acyl-coenzyme A carboxylase alpha3 subunit (598 aa).

The 445-residue stretch at 8 to 452 (RIAKVLVANR…SFSVHTRWIE (445 aa)) folds into the Biotin carboxylation domain. In terms of domain architecture, ATP-grasp spans 127-324 (RHIAARAQAP…LVLQQFKIAN (198 aa)). 155 to 216 (AKEHGVPIAI…ERYLDKPRHV (62 aa)) provides a ligand contact to ATP. Residues glutamate 282, glutamate 295, and asparagine 297 each coordinate Mg(2+). Residues glutamate 282, glutamate 295, and asparagine 297 each contribute to the Mn(2+) site. Positions 506–531 (PAGVIRKKPKPRKRGGHTGAATSGDA) are disordered. Basic residues predominate over residues 510–521 (IRKKPKPRKRGG). The 77-residue stretch at 522–598 (HTGAATSGDA…TQGTVLAEIK (77 aa)) folds into the Biotinyl-binding domain. Residue lysine 564 is modified to N6-biotinyllysine.

In terms of assembly, the biotin-dependent acyl-CoA carboxylase complex is composed of AccA3, which contains the biotin carboxylase (BC) and biotin carboxyl carrier protein (BCCP) domains, and an AccD protein, which contains the carboxyl transferase (CT) domain. Mg(2+) serves as cofactor. Mn(2+) is required as a cofactor. The cofactor is biotin.

It catalyses the reaction N(6)-biotinyl-L-lysyl-[protein] + hydrogencarbonate + ATP = N(6)-carboxybiotinyl-L-lysyl-[protein] + ADP + phosphate + H(+). It participates in lipid metabolism; fatty acid biosynthesis. Its pathway is lipid metabolism; mycolic acid biosynthesis. Functionally, component of a biotin-dependent acyl-CoA carboxylase complex. This subunit catalyzes the ATP-dependent carboxylation of the biotin carried by the biotin carboxyl carrier (BCC) domain, resulting in the formation of carboxyl biotin. This is Biotin-dependent acyl-coenzyme A carboxylase alpha3 subunit (bccA) from Mycobacterium leprae (strain TN).